The sequence spans 185 residues: Large ribosomal subunit protein uL5m (185 aa).

It belongs to the universal ribosomal protein uL5 family.

It localises to the mitochondrion. This chain is Large ribosomal subunit protein uL5m (RPL5), found in Brassica napus (Rape).